The sequence spans 563 residues: uncharacterized protein (563 aa).

This sequence belongs to the HyuB family.

This is an uncharacterized protein from Methanocaldococcus jannaschii (strain ATCC 43067 / DSM 2661 / JAL-1 / JCM 10045 / NBRC 100440) (Methanococcus jannaschii).